We begin with the raw amino-acid sequence, 407 residues long: Triose phosphate/phosphate translocator, chloroplastic (407 aa).

The transit peptide at Met1–Ser81 directs the protein to the chloroplast. Over Ala82 to Pro101 the chain is Chloroplast intermembrane. Residues Phe102–Leu122 traverse the membrane as a helical segment. Residues Asn123–Tyr134 are Lumenal-facing. The chain crosses the membrane as a helical span at residues Phe135 to Gly155. The Chloroplast intermembrane segment spans residues Leu156 to Gln212. Residues Phe213–Gly233 traverse the membrane as a helical segment. Residues Val234–Asn277 are Lumenal-facing. A helical transmembrane segment spans residues Leu278–Phe297. Residues Glu298–Gln375 are Chloroplast intermembrane-facing. Residues Thr376–Arg396 form a helical membrane-spanning segment. Over Ile397–Ala407 the chain is Lumenal.

The protein belongs to the TPT transporter family. TPT (TC 2.A.7.9) subfamily. In terms of assembly, homodimer.

It is found in the plastid. Its subcellular location is the chloroplast membrane. Its function is as follows. Mediates the export of fixed carbons from the chloroplasts into the cytosol in the form of triose phosphates. In addition, it can also bind and transport phosphoenolpyruvate, thereby increasing the photosynthetic efficiency of C4-plants. This chain is Triose phosphate/phosphate translocator, chloroplastic (TPT), found in Flaveria trinervia (Clustered yellowtops).